Consider the following 355-residue polypeptide: Ion-translocating oxidoreductase complex subunit D (355 aa).

A run of 4 helical transmembrane segments spans residues 23–43, 44–64, 78–109, and 129–149; these read WVAL…GWGT, LVQL…VMLF, ALVT…IVIA, and VVLL…LPLI. Residue T194 is modified to FMN phosphoryl threonine. A run of 5 helical transmembrane segments spans residues 221–241, 250–270, 273–293, 307–327, and 328–348; these read FAGV…LILL, IPVG…LFFP, TASP…FFIA, ILFG…GGFP, and DGVA…DYYT.

It belongs to the NqrB/RnfD family. In terms of assembly, the complex is composed of six subunits: RnfA, RnfB, RnfC, RnfD, RnfE and RnfG. FMN serves as cofactor.

The protein resides in the cell inner membrane. Part of a membrane-bound complex that couples electron transfer with translocation of ions across the membrane. The polypeptide is Ion-translocating oxidoreductase complex subunit D (Vibrio vulnificus (strain CMCP6)).